Reading from the N-terminus, the 370-residue chain is Chorismate synthase (370 aa).

A disordered region spans residues 41 to 60; sequence IQGDLDRRKPGTSRHVTQRK. NADP(+) contacts are provided by Arg-48 and Arg-54. Residues 125–127, 238–239, Gly-278, 293–297, and Arg-319 contribute to the FMN site; these read RSS, NA, and KPTSS.

The protein belongs to the chorismate synthase family. As to quaternary structure, homotetramer. Requires FMNH2 as cofactor.

It catalyses the reaction 5-O-(1-carboxyvinyl)-3-phosphoshikimate = chorismate + phosphate. It functions in the pathway metabolic intermediate biosynthesis; chorismate biosynthesis; chorismate from D-erythrose 4-phosphate and phosphoenolpyruvate: step 7/7. Functionally, catalyzes the anti-1,4-elimination of the C-3 phosphate and the C-6 proR hydrogen from 5-enolpyruvylshikimate-3-phosphate (EPSP) to yield chorismate, which is the branch point compound that serves as the starting substrate for the three terminal pathways of aromatic amino acid biosynthesis. This reaction introduces a second double bond into the aromatic ring system. This is Chorismate synthase from Cupriavidus pinatubonensis (strain JMP 134 / LMG 1197) (Cupriavidus necator (strain JMP 134)).